The primary structure comprises 279 residues: MPTTGNYFHLHLVSDSTGETLITVARAVAAQYANVTPVEHVYPLVRSQKQLDRVLDEIEEAPGIVLFTLLEKDLVSRLEAKCQQINIPSLSIIGPVMQLFEAYLGASTAGRVGAQHVLNAEYFARIDALNYTMLHDDGQMVDGLEDADVVLVGVSRTSKTPTSIYLANRGVRTANVPLVPGIPIPHQLEVLKKPLVVSLHATPERLIQVRQNRLLSMGAESGNENYVDKQSVTDEVAYARKLSAKFNWVMLDVTRRSIEETAAAILKLYSDRQRQRLPE.

G153–T160 contacts ADP.

The protein belongs to the pyruvate, phosphate/water dikinase regulatory protein family. PDRP subfamily.

It catalyses the reaction N(tele)-phospho-L-histidyl/L-threonyl-[pyruvate, phosphate dikinase] + ADP = N(tele)-phospho-L-histidyl/O-phospho-L-threonyl-[pyruvate, phosphate dikinase] + AMP + H(+). The catalysed reaction is N(tele)-phospho-L-histidyl/O-phospho-L-threonyl-[pyruvate, phosphate dikinase] + phosphate + H(+) = N(tele)-phospho-L-histidyl/L-threonyl-[pyruvate, phosphate dikinase] + diphosphate. Its function is as follows. Bifunctional serine/threonine kinase and phosphorylase involved in the regulation of the pyruvate, phosphate dikinase (PPDK) by catalyzing its phosphorylation/dephosphorylation. The protein is Putative pyruvate, phosphate dikinase regulatory protein of Bradyrhizobium sp. (strain ORS 278).